Consider the following 173-residue polypeptide: Co-chaperone protein HscB homolog (173 aa).

The J domain maps to 5–77 (CHYALFDLQP…PRRARYLLAI (73 aa)).

Belongs to the HscB family. As to quaternary structure, interacts with HscA and stimulates its ATPase activity.

Co-chaperone involved in the maturation of iron-sulfur cluster-containing proteins. Seems to help targeting proteins to be folded toward HscA. The sequence is that of Co-chaperone protein HscB homolog from Pseudomonas entomophila (strain L48).